The sequence spans 202 residues: Dephospho-CoA kinase (202 aa).

The DPCK domain maps to 4-202 (FLGLTGGIAT…EGVCHKSGMS (199 aa)). Position 12–17 (12–17 (ATGKTT)) interacts with ATP.

It belongs to the CoaE family.

The protein resides in the cytoplasm. The catalysed reaction is 3'-dephospho-CoA + ATP = ADP + CoA + H(+). Its pathway is cofactor biosynthesis; coenzyme A biosynthesis; CoA from (R)-pantothenate: step 5/5. Its function is as follows. Catalyzes the phosphorylation of the 3'-hydroxyl group of dephosphocoenzyme A to form coenzyme A. This Latilactobacillus sakei subsp. sakei (strain 23K) (Lactobacillus sakei subsp. sakei) protein is Dephospho-CoA kinase.